A 699-amino-acid polypeptide reads, in one-letter code: Polyribonucleotide nucleotidyltransferase (699 aa).

Residues aspartate 487 and aspartate 493 each coordinate Mg(2+). One can recognise a KH domain in the interval 554 to 613 (PRMLNMKINPEKIRDVIGKGGAVIRALQEETGTVIEIEDDGSITISSVSAEGAQKAKARI). The S1 motif domain maps to 623–691 (GKVYEGTVVR…ERGKIRLSMK (69 aa)).

It belongs to the polyribonucleotide nucleotidyltransferase family. The cofactor is Mg(2+).

Its subcellular location is the cytoplasm. The enzyme catalyses RNA(n+1) + phosphate = RNA(n) + a ribonucleoside 5'-diphosphate. Involved in mRNA degradation. Catalyzes the phosphorolysis of single-stranded polyribonucleotides processively in the 3'- to 5'-direction. The sequence is that of Polyribonucleotide nucleotidyltransferase from Azoarcus sp. (strain BH72).